Consider the following 115-residue polypeptide: SOSS complex subunit C homolog (115 aa).

The protein belongs to the SOSS-C family.

The chain is SOSS complex subunit C homolog from Drosophila grimshawi (Hawaiian fruit fly).